We begin with the raw amino-acid sequence, 325 residues long: HTH-type transcriptional regulator VqsM (325 aa).

Residues 226–323 (QRIELFLDSI…GQSTTEFRNS (98 aa)) enclose the HTH araC/xylS-type domain. 2 consecutive DNA-binding regions (H-T-H motif) follow at residues 243-264 (VTTA…ADEG) and 290-313 (VDRI…RRWT).

Functionally, transcriptional regulator involved in both the repression (at least 99 genes, such as mexR and algU) and in the activation (at least 203 genes, such as mvfR, rsaL, vqsR and rpoS) of regulatory or putative regulatory proteins which are implicated in quorum sensing, virulence and multidrug resistance. The polypeptide is HTH-type transcriptional regulator VqsM (vqsM) (Pseudomonas aeruginosa (strain ATCC 15692 / DSM 22644 / CIP 104116 / JCM 14847 / LMG 12228 / 1C / PRS 101 / PAO1)).